The chain runs to 241 residues: Uridylate kinase (241 aa).

9–10 (GS) contributes to the ATP binding site. Glycine 44 serves as a coordination point for UMP. 2 residues coordinate ATP: glycine 45 and arginine 49. UMP contacts are provided by residues aspartate 66 and 114–120 (VVAGQTT). Residues threonine 140, phenylalanine 146, and aspartate 149 each contribute to the ATP site.

This sequence belongs to the UMP kinase family. In terms of assembly, homohexamer.

The protein resides in the cytoplasm. It catalyses the reaction UMP + ATP = UDP + ADP. The protein operates within pyrimidine metabolism; CTP biosynthesis via de novo pathway; UDP from UMP (UMPK route): step 1/1. Inhibited by UTP. Catalyzes the reversible phosphorylation of UMP to UDP. The protein is Uridylate kinase of Halobacterium salinarum (strain ATCC 29341 / DSM 671 / R1).